Reading from the N-terminus, the 149-residue chain is 3-dehydroquinate dehydratase (149 aa).

The Proton acceptor role is filled by Tyr23. 3 residues coordinate substrate: Asn75, His81, and Asp88. His101 acts as the Proton donor in catalysis. Residues Leu102–Ser103 and Arg112 contribute to the substrate site.

The protein belongs to the type-II 3-dehydroquinase family. In terms of assembly, homododecamer.

It carries out the reaction 3-dehydroquinate = 3-dehydroshikimate + H2O. Its pathway is metabolic intermediate biosynthesis; chorismate biosynthesis; chorismate from D-erythrose 4-phosphate and phosphoenolpyruvate: step 3/7. Catalyzes a trans-dehydration via an enolate intermediate. The polypeptide is 3-dehydroquinate dehydratase (Stenotrophomonas maltophilia (strain R551-3)).